Reading from the N-terminus, the 207-residue chain is Large ribosomal subunit protein bL25 (207 aa).

Positions 171–207 (EEETVVTVSAPRAEEEPTTTEAPEPEAVHGNDEEPVE) are disordered. Basic and acidic residues predominate over residues 196 to 207 (EAVHGNDEEPVE).

This sequence belongs to the bacterial ribosomal protein bL25 family. CTC subfamily. Part of the 50S ribosomal subunit; part of the 5S rRNA/L5/L18/L25 subcomplex. Contacts the 5S rRNA. Binds to the 5S rRNA independently of L5 and L18.

Functionally, this is one of the proteins that binds to the 5S RNA in the ribosome where it forms part of the central protuberance. The sequence is that of Large ribosomal subunit protein bL25 from Listeria innocua serovar 6a (strain ATCC BAA-680 / CLIP 11262).